The primary structure comprises 72 residues: Aurein-2.2 (72 aa).

Positions 1-22 (MAFLKKSLFLVLFLGLVSLSIC) are cleaved as a signal peptide. Positions 23 to 49 (EKEKRQNEEDEDENEAANHEEGSEEKR) are excised as a propeptide. Positions 27–47 (RQNEEDEDENEAANHEEGSEE) are disordered. The span at 38–47 (AANHEEGSEE) shows a compositional bias: basic and acidic residues. L65 is modified (leucine amide). Positions 69 to 72 (NDLE) are excised as a propeptide.

Post-translationally, amidation is essential for antibacterial activity against Gram-positive bacteria. In terms of tissue distribution, expressed by the skin dorsal glands.

It is found in the secreted. It localises to the target cell membrane. In terms of biological role, amphipathic alpha-helical antimicrobial peptide with weak to moderate activity against Gram-positive bacteria, and no activity against Gram-negative bacteria. Probably acts by disturbing membrane functions with its amphipathic structure. Strongly inhibits the formation of NO by neuronal nitric oxide synthase (nNOS) at micromolar concentrations. Acts by a non-competitive mechanism, probably by binding to calcium/calmodulin and as a consequence blocking calmodulin attachment to nNOS. The polypeptide is Aurein-2.2 (Ranoidea aurea (Green and golden bell frog)).